The sequence spans 286 residues: 4-diphosphocytidyl-2-C-methyl-D-erythritol kinase (286 aa).

The active site involves Lys11. 94–104 provides a ligand contact to ATP; the sequence is PMGGGIGGGSS. The active site involves Asp136.

Belongs to the GHMP kinase family. IspE subfamily.

It catalyses the reaction 4-CDP-2-C-methyl-D-erythritol + ATP = 4-CDP-2-C-methyl-D-erythritol 2-phosphate + ADP + H(+). It functions in the pathway isoprenoid biosynthesis; isopentenyl diphosphate biosynthesis via DXP pathway; isopentenyl diphosphate from 1-deoxy-D-xylulose 5-phosphate: step 3/6. Catalyzes the phosphorylation of the position 2 hydroxy group of 4-diphosphocytidyl-2C-methyl-D-erythritol. The polypeptide is 4-diphosphocytidyl-2-C-methyl-D-erythritol kinase (Pseudomonas putida (strain ATCC 47054 / DSM 6125 / CFBP 8728 / NCIMB 11950 / KT2440)).